The chain runs to 297 residues: 4-hydroxy-tetrahydrodipicolinate synthase (297 aa).

Pyruvate is bound at residue Thr-47. Tyr-136 acts as the Proton donor/acceptor in catalysis. Catalysis depends on Lys-165, which acts as the Schiff-base intermediate with substrate. Ile-206 provides a ligand contact to pyruvate.

This sequence belongs to the DapA family. Homotetramer; dimer of dimers.

The protein resides in the cytoplasm. It catalyses the reaction L-aspartate 4-semialdehyde + pyruvate = (2S,4S)-4-hydroxy-2,3,4,5-tetrahydrodipicolinate + H2O + H(+). It participates in amino-acid biosynthesis; L-lysine biosynthesis via DAP pathway; (S)-tetrahydrodipicolinate from L-aspartate: step 3/4. Functionally, catalyzes the condensation of (S)-aspartate-beta-semialdehyde [(S)-ASA] and pyruvate to 4-hydroxy-tetrahydrodipicolinate (HTPA). In Campylobacter fetus subsp. fetus (strain 82-40), this protein is 4-hydroxy-tetrahydrodipicolinate synthase.